Consider the following 291-residue polypeptide: 3-hydroxy-5-phosphonooxypentane-2,4-dione thiolase (291 aa).

Residue lysine 203 is the Schiff-base intermediate with substrate of the active site.

It belongs to the DeoC/FbaB aldolase family. As to quaternary structure, homodecamer.

The protein resides in the cytoplasm. The catalysed reaction is dihydroxyacetone phosphate + acetyl-CoA = 3-hydroxy-2,4-dioxopentyl phosphate + CoA. Functionally, involved in the degradation of phospho-AI-2, thereby terminating induction of the lsr operon and closing the AI-2 signaling cycle. Catalyzes the transfer of an acetyl moiety from 3-hydroxy-5-phosphonooxypentane-2,4-dione to CoA to form glycerone phosphate and acetyl-CoA. This Salmonella typhimurium (strain LT2 / SGSC1412 / ATCC 700720) protein is 3-hydroxy-5-phosphonooxypentane-2,4-dione thiolase.